The primary structure comprises 483 residues: MLTRSPASAAATSPTTTVTVTVTAAATSPRPSRGAAPHGHFHYAPTPSLREAASRIPALSSRRQSATAPATSSTSLPISIQSRHGPAPVASHTSSPVASDPGLGFPPSSRPQRWAGVDVVAQYSPMEPMDYTTGALLSSQAASSSNNQAVARGSIESRPSHIPNTVGPMASHEEQASALASTSEATAAPIPHGPTVAVAVPPTPGVYSAAPQPHPLSHTPQTGTPVKRRNSQGDVTHNQVEAASAGQSGPHSPKRARLAPKIVSRRYEHCPVEDLVVLIAHMLGELIELNDEAAQKVGQRHNLTRFHSRTTPGISVLDYLHRLAKHAYLSPPILLSMVYYIDRLCALYSDFTINTLTVHRFLITAATVAAKGLSDSFLTNTLYARVGGVRVAELNMLELEFLHRVDWKIVPDPDVLVAYYGGLVARCPGYILECPEPEEADDEDEDEELDESDAIGDDDDDIDGEGGEREEETSSSQRDRHAT.

Low complexity-rich tracts occupy residues 1–32, 60–80, and 176–200; these read MLTR…PRPS, SSRR…PISI, and ASAL…AVAV. 3 disordered regions span residues 1–112, 164–234, and 434–483; these read MLTR…SRPQ, NTVG…SQGD, and CPEP…RHAT. Over residues 435 to 473 the composition is skewed to acidic residues; that stretch reads PEPEEADDEDEDEELDESDAIGDDDDDIDGEGGEREEET.

This sequence belongs to the cyclin family.

Negative regulator, together with pgov, of the transcriptional activator nuc-1, which controls the expression of phosphorous acquisition enzymes. The chain is Nuc-1 negative regulatory protein preg (preg) from Neurospora crassa (strain ATCC 24698 / 74-OR23-1A / CBS 708.71 / DSM 1257 / FGSC 987).